The primary structure comprises 167 residues: N-alpha-acetyltransferase (167 aa).

An N-acetyltransferase domain is found at 12 to 167 (FTLRNARMDD…EDAYLMARPL (156 aa)). Tyrosine 37 lines the substrate pocket. Histidine 88 lines the Zn(2+) pocket. Acetyl-CoA contacts are provided by residues 92 to 94 (IAV) and 100 to 105 (RKGIAT). Position 127 (glutamate 127) interacts with Zn(2+). Acetyl-CoA-binding positions include asparagine 132 and 139-141 (YEK). Tyrosine 154 lines the substrate pocket.

The protein belongs to the acetyltransferase family. ARD1 subfamily. In terms of assembly, homodimer.

Its subcellular location is the cytoplasm. The catalysed reaction is N-terminal L-alanyl-[protein] + acetyl-CoA = N-terminal N(alpha)-acetyl-L-alanyl-[protein] + CoA + H(+). It carries out the reaction N-terminal L-seryl-[protein] + acetyl-CoA = N-terminal N(alpha)-acetyl-L-seryl-[protein] + CoA + H(+). It catalyses the reaction N-terminal L-methionyl-L-leucyl-[protein] + acetyl-CoA = N-terminal N(alpha)-acetyl-L-methionyl-L-leucyl-[protein] + CoA + H(+). The enzyme catalyses N-terminal L-methionyl-L-glutamyl-[protein] + acetyl-CoA = N-terminal N(alpha)-acetyl-L-methionyl-L-glutamyl-[protein] + CoA + H(+). Functionally, displays alpha (N-terminal) acetyltransferase activity. Catalyzes the covalent attachment of an acetyl moiety from acetyl-CoA to the free alpha-amino group at the N-terminus of a protein. NAT is able to acetylate the alpha-amino group of methionine, alanine and serine N-terminal residue substrates, however it has a preference for Ser-N-terminal substrates. This is N-alpha-acetyltransferase from Saccharolobus solfataricus (strain ATCC 35092 / DSM 1617 / JCM 11322 / P2) (Sulfolobus solfataricus).